Reading from the N-terminus, the 250-residue chain is Probable transcriptional regulatory protein SAV_6832 (250 aa).

This sequence belongs to the TACO1 family.

It is found in the cytoplasm. The protein is Probable transcriptional regulatory protein SAV_6832 of Streptomyces avermitilis (strain ATCC 31267 / DSM 46492 / JCM 5070 / NBRC 14893 / NCIMB 12804 / NRRL 8165 / MA-4680).